The sequence spans 698 residues: Serine/threonine-protein kinase Nek8 (698 aa).

A Protein kinase domain is found at 4–258 (YERIRVVGRG…LSHIMAQPLC (255 aa)). Residues 10-18 (VGRGAFGIV) and lysine 33 contribute to the ATP site. Aspartate 128 (proton acceptor) is an active-site residue. Threonine 162 bears the Phosphothreonine; by autocatalysis mark. A disordered region spans residues 278 to 309 (EKSLTPGPPIASGSTGSRATSARCRGVPRGPV). Low complexity predominate over residues 288-309 (ASGSTGSRATSARCRGVPRGPV). RCC1 repeat units lie at residues 416–467 (GIIM…LSTD), 468–519 (GELF…LTSP), 520–585 (GRVL…ITAS), 586–637 (GDCY…VGAE), and 638–690 (GEVY…AVRS).

Belongs to the protein kinase superfamily. NEK Ser/Thr protein kinase family. NIMA subfamily. Interacts with PKD2; may regulate PKD2 targeting to the cilium. Interacts with ANKS6. Component of a complex containing at least ANKS6, INVS, NEK8 and NPHP3. ANKS6 may organize complex assembly by linking INVS and NPHP3 to NEK8 and INVS may target the complex to the proximal ciliary axoneme. Interacts with ANKS3. It depends on Mg(2+) as a cofactor. As to expression, kidney, liver, and testis.

The protein localises to the cytoplasm. It is found in the cytoskeleton. Its subcellular location is the cell projection. It localises to the cilium. The protein resides in the microtubule organizing center. The protein localises to the centrosome. It is found in the cilium axoneme. It catalyses the reaction L-seryl-[protein] + ATP = O-phospho-L-seryl-[protein] + ADP + H(+). The enzyme catalyses L-threonyl-[protein] + ATP = O-phospho-L-threonyl-[protein] + ADP + H(+). Its function is as follows. Required for renal tubular integrity. May regulate local cytoskeletal structure in kidney tubule epithelial cells. May regulate ciliary biogenesis through targeting of proteins to the cilia. Plays a role in organogenesis and is involved in the regulation of the Hippo signaling pathway. The sequence is that of Serine/threonine-protein kinase Nek8 (Nek8) from Mus musculus (Mouse).